The sequence spans 338 residues: Ferredoxin--NADP reductase (338 aa).

The FAD site is built by aspartate 35, glutamine 43, tyrosine 48, alanine 88, phenylalanine 122, aspartate 289, and threonine 330.

This sequence belongs to the ferredoxin--NADP reductase type 2 family. As to quaternary structure, homodimer. It depends on FAD as a cofactor.

The catalysed reaction is 2 reduced [2Fe-2S]-[ferredoxin] + NADP(+) + H(+) = 2 oxidized [2Fe-2S]-[ferredoxin] + NADPH. This Ehrlichia chaffeensis (strain ATCC CRL-10679 / Arkansas) protein is Ferredoxin--NADP reductase.